A 277-amino-acid chain; its full sequence is MKFTKMHGLGNDYIYVDAISQKIENPNEISKFVSDRHFGIGSDGLVLILPSDVADFKMRMFNSDGSEAEMCGNAIRCVGKFVYDKKMTDKSTITIETLAGIKVLEMTIENGKVVLVKVDMGEPILKAEEIPVLSEKHPVIDEEITAKDYCYNFTCVSMGNPHAITYIENVDEFPLEKIGPLFEIHEKFPRKTNVEFVELIDKNTVKMRVWERGAGETLACGTGACAVLTASVLKGYVGRKATVKLLGGDLTIEWNEFDKHIYMTGPATTVFEGEIDI.

2 residues coordinate substrate: Asn11 and Asn62. Residue Cys71 is the Proton donor of the active site. Substrate-binding positions include Gly72–Asn73, Asn160, Asn193, and Glu211–Arg212. The Proton acceptor role is filled by Cys220. A substrate-binding site is contributed by Gly221 to Thr222.

Belongs to the diaminopimelate epimerase family. In terms of assembly, homodimer.

It localises to the cytoplasm. The catalysed reaction is (2S,6S)-2,6-diaminopimelate = meso-2,6-diaminopimelate. It participates in amino-acid biosynthesis; L-lysine biosynthesis via DAP pathway; DL-2,6-diaminopimelate from LL-2,6-diaminopimelate: step 1/1. In terms of biological role, catalyzes the stereoinversion of LL-2,6-diaminopimelate (L,L-DAP) to meso-diaminopimelate (meso-DAP), a precursor of L-lysine. This Methanococcus maripaludis (strain DSM 14266 / JCM 13030 / NBRC 101832 / S2 / LL) protein is Diaminopimelate epimerase.